A 258-amino-acid chain; its full sequence is Venom plasminogen activator TSV-PA (258 aa).

An N-terminal signal peptide occupies residues 1–18; the sequence is MELIRVLANLLILQLSYA. A propeptide spanning residues 19-24 is cleaved from the precursor; sequence QKSSEL. Positions 25 to 249 constitute a Peptidase S1 domain; it reads VFGGDECNIN…YLDWIKSIIA (225 aa). 6 disulfides stabilise this stretch: cysteine 31–cysteine 163, cysteine 50–cysteine 66, cysteine 98–cysteine 256, cysteine 142–cysteine 210, cysteine 174–cysteine 189, and cysteine 200–cysteine 225. Catalysis depends on charge relay system residues histidine 65 and aspartate 110. The N-linked (GlcNAc...) asparagine glycan is linked to asparagine 185. The active-site Charge relay system is serine 204.

Belongs to the peptidase S1 family. Snake venom subfamily. Monomer. As to expression, expressed by the venom gland.

It localises to the secreted. Snake venom serine protease that activates plasminogen. The protein is Venom plasminogen activator TSV-PA of Trimeresurus stejnegeri (Chinese green tree viper).